A 306-amino-acid polypeptide reads, in one-letter code: Olfactory receptor 8G17 (306 aa).

The Extracellular portion of the chain corresponds to 1–28; it reads MEKGNQSTVNKFFLSGLTEQPELQLPLF. Asparagine 5 carries an N-linked (GlcNAc...) asparagine glycan. Residues 29-49 form a helical membrane-spanning segment; sequence LLFLGIYLLTVLGNLGMIILI. The Cytoplasmic portion of the chain corresponds to 50 to 56; the sequence is LLSSYLH. The helical transmembrane segment at 57 to 77 threads the bilayer; it reads TPMYFFLSSLSFIDFCQSTVI. Residues 78-97 are Extracellular-facing; that stretch reads TPKMLVKFVREKNEISYPEC. The helical transmembrane segment at 98-118 threads the bilayer; that stretch reads ITQLCFFVIFAVSESYMLAAM. Topologically, residues 119–143 are cytoplasmic; that stretch reads AYDRYVAICSPLLYSSIMSQHKCLS. The helical transmembrane segment at 144 to 164 threads the bilayer; it reads LVLGVYILGIVCASAHVGCIF. Residues 165–196 are Extracellular-facing; the sequence is RIDFCKSDLINHYFCDLISILNLSCSNIFVND. A helical transmembrane segment spans residues 197-217; that stretch reads LVILIFSLINTIFPTLTILSS. Over 218-236 the chain is Cytoplasmic; that stretch reads YAFIIISILRIKSTEGRSK. Residues 237–257 form a helical membrane-spanning segment; that stretch reads AFSTCSSHISAVAIFYISAGF. Residues 258–271 lie on the Extracellular side of the membrane; sequence TYLNPSSSHSMDEG. Residues 272 to 292 form a helical membrane-spanning segment; that stretch reads KVSSIFYTIIVPMLNPLIYSL. Topologically, residues 293–306 are cytoplasmic; it reads RNKDVKIALKKMIE.

It belongs to the G-protein coupled receptor 1 family.

The protein resides in the cell membrane. Its function is as follows. Odorant receptor. This Mus musculus (Mouse) protein is Olfactory receptor 8G17.